Consider the following 216-residue polypeptide: Octanoyltransferase (216 aa).

The 179-residue stretch at 35–213 (NSNPDFIWIG…IIQEEFNFDF (179 aa)) folds into the BPL/LPL catalytic domain. Residues 77 to 84 (RGGEVTCH), 144 to 146 (SIG), and 157 to 159 (GFS) each bind substrate. The active-site Acyl-thioester intermediate is Cys175.

It belongs to the LipB family.

The protein resides in the cytoplasm. The enzyme catalyses octanoyl-[ACP] + L-lysyl-[protein] = N(6)-octanoyl-L-lysyl-[protein] + holo-[ACP] + H(+). The protein operates within protein modification; protein lipoylation via endogenous pathway; protein N(6)-(lipoyl)lysine from octanoyl-[acyl-carrier-protein]: step 1/2. Functionally, catalyzes the transfer of endogenously produced octanoic acid from octanoyl-acyl-carrier-protein onto the lipoyl domains of lipoate-dependent enzymes. Lipoyl-ACP can also act as a substrate although octanoyl-ACP is likely to be the physiological substrate. The chain is Octanoyltransferase from Prochlorococcus marinus (strain MIT 9215).